A 562-amino-acid polypeptide reads, in one-letter code: Carboxylesterase 1E (562 aa).

Positions 1–19 are cleaved as a signal peptide; it reads MCLSALILVSLAAFTAGAG. The N-linked (GlcNAc...) asparagine glycan is linked to Asn80. Residues Cys88 and Cys117 are joined by a disulfide bond. Ser222 functions as the Acyl-ester intermediate in the catalytic mechanism. A disulfide bridge links Cys274 with Cys285. Asn276 is a glycosylation site (N-linked (GlcNAc...) asparagine). Catalysis depends on charge relay system residues Glu354 and His467. An N-linked (GlcNAc...) asparagine glycan is attached at Asn490. The Prevents secretion from ER signature appears at 559 to 562; it reads HTEL.

The protein belongs to the type-B carboxylesterase/lipase family.

It is found in the endoplasmic reticulum lumen. Its subcellular location is the microsome membrane. It catalyses the reaction a carboxylic ester + H2O = an alcohol + a carboxylate + H(+). It carries out the reaction all-trans-retinyl hexadecanoate + H2O = all-trans-retinol + hexadecanoate + H(+). Its function is as follows. Involved in the detoxification of xenobiotics and in the activation of ester and amide prodrugs. Hydrolyzes retinyl esters. The chain is Carboxylesterase 1E from Mus musculus (Mouse).